Here is a 505-residue protein sequence, read N- to C-terminus: Amidophosphoribosyltransferase (505 aa).

The active-site Nucleophile is the Cys-2. Positions 2 to 236 (CGIVGIAGVM…PGEAIYITEE (235 aa)) constitute a Glutamine amidotransferase type-2 domain. Residues Thr-305, Asp-367, and Asp-368 each contribute to the Mg(2+) site.

It in the C-terminal section; belongs to the purine/pyrimidine phosphoribosyltransferase family. Homotetramer. Mg(2+) serves as cofactor.

The catalysed reaction is 5-phospho-beta-D-ribosylamine + L-glutamate + diphosphate = 5-phospho-alpha-D-ribose 1-diphosphate + L-glutamine + H2O. It functions in the pathway purine metabolism; IMP biosynthesis via de novo pathway; N(1)-(5-phospho-D-ribosyl)glycinamide from 5-phospho-alpha-D-ribose 1-diphosphate: step 1/2. With respect to regulation, inhibited by iodoacetamide and by the glutamine analogs chloroketone and DON. Its function is as follows. Catalyzes the formation of phosphoribosylamine from phosphoribosylpyrophosphate (PRPP) and glutamine. Can also use NH(3) in place of glutamine. In Escherichia coli (strain K12), this protein is Amidophosphoribosyltransferase.